A 310-amino-acid chain; its full sequence is Homeobox protein knotted-1-like 2 (310 aa).

The disordered stretch occupies residues Ser-178 to Asp-208. Residues Ser-185–Ala-197 are compositionally biased toward acidic residues. One can recognise an ELK domain in the interval Asp-208–Phe-228. The segment at residues Ser-229–Ser-292 is a DNA-binding region (homeobox; TALE-type).

This sequence belongs to the TALE/KNOX homeobox family. As to quaternary structure, may form heterodimeric complex with the TALE/BELL protein BEL1, BLH1 and BLH2. Interacts with OFP12 and OFP14. Interacts with BZIP30. As to expression, expressed predominantly in shoot apices of seedlings, in the receptacle and developing pistil of flowers and in axillary buds of inflorescence stems.

Its subcellular location is the nucleus. Its function is as follows. May play a role in meristem function, and may be involved in maintaining cells in an undifferentiated, meristematic state. Probably binds to the DNA sequence 5'-TGAC-3'. In Arabidopsis thaliana (Mouse-ear cress), this protein is Homeobox protein knotted-1-like 2 (KNAT2).